A 101-amino-acid polypeptide reads, in one-letter code: Small ribosomal subunit protein uS14 (101 aa).

The protein belongs to the universal ribosomal protein uS14 family. As to quaternary structure, part of the 30S ribosomal subunit. Contacts proteins S3 and S10.

Its function is as follows. Binds 16S rRNA, required for the assembly of 30S particles and may also be responsible for determining the conformation of the 16S rRNA at the A site. The polypeptide is Small ribosomal subunit protein uS14 (Haemophilus ducreyi (strain 35000HP / ATCC 700724)).